Here is a 456-residue protein sequence, read N- to C-terminus: Putative alanyl-tRNA editing protein alaX (456 aa).

Residues histidine 125, histidine 129, cysteine 240, and histidine 244 each coordinate Zn(2+).

It belongs to the class-II aminoacyl-tRNA synthetase family. Alax-L subfamily. Zn(2+) serves as cofactor.

Its function is as follows. May function in trans to edit the amino acid moiety from incorrectly charged tRNA(Ala). The chain is Putative alanyl-tRNA editing protein alaX from Saccharomyces cerevisiae (strain ATCC 204508 / S288c) (Baker's yeast).